A 469-amino-acid polypeptide reads, in one-letter code: L-seryl-tRNA(Sec) selenium transferase (469 aa).

At K295 the chain carries N6-(pyridoxal phosphate)lysine.

Belongs to the SelA family. The cofactor is pyridoxal 5'-phosphate.

It is found in the cytoplasm. The enzyme catalyses L-seryl-tRNA(Sec) + selenophosphate + H(+) = L-selenocysteinyl-tRNA(Sec) + phosphate. It participates in aminoacyl-tRNA biosynthesis; selenocysteinyl-tRNA(Sec) biosynthesis; selenocysteinyl-tRNA(Sec) from L-seryl-tRNA(Sec) (bacterial route): step 1/1. Its function is as follows. Converts seryl-tRNA(Sec) to selenocysteinyl-tRNA(Sec) required for selenoprotein biosynthesis. The protein is L-seryl-tRNA(Sec) selenium transferase of Methylocella silvestris (strain DSM 15510 / CIP 108128 / LMG 27833 / NCIMB 13906 / BL2).